Here is a 1436-residue protein sequence, read N- to C-terminus: Gag-Pol polyprotein (1436 aa).

Gly-2 is lipidated: N-myristoyl glycine; by host. Positions 7–31 (VLSGGKLDAWEKIRLRPGGRKKYRL) are interaction with Gp41. The interaction with host CALM1 stretch occupies residues 8-43 (LSGGKLDAWEKIRLRPGGRKKYRLKHLVWASRELER). The segment at 12–19 (KLDAWEKI) is interaction with host AP3D1. An interaction with membrane phosphatidylinositol 4,5-bisphosphate and RNA region spans residues 14-33 (DAWEKIRLRPGGRKKYRLKH). Residues 16–22 (WEKIRLR) carry the Nuclear export signal motif. Residues 26 to 32 (RKKYRLK) carry the Nuclear localization signal motif. The interval 73–77 (EDLQS) is interaction with membrane phosphatidylinositol 4,5-bisphosphate. The interval 110–129 (KNKQRTQQAPAAADKEKDSK) is disordered. Phosphotyrosine; by host is present on Tyr-134. Positions 191-229 (NTVGGHQAAMQMLKDTINEEAAEWDRLHPVHAGPIPPGQ) are interaction with human PPIA/CYPA and NUP153. The interval 279–365 (YSPVSILDIK…GGPSHKARVL (87 aa)) is dimerization/Multimerization of capsid protein p24. 2 CCHC-type zinc fingers span residues 393 to 410 (VKCS…NCRA) and 414 to 431 (KGCW…DCTG). Basic and acidic residues-rich tracts occupy residues 447–457 (KAREFPPEEAR) and 464–475 (RELRVRRGDHPL). The disordered stretch occupies residues 447–482 (KAREFPPEEARANSPTSRELRVRRGDHPLSEAGAER). A dimerization of protease region spans residues 490–494 (PQITL). Residues 509-578 (KEALLDTGAD…TPVNIIGRNI (70 aa)) form the Peptidase A2 domain. Asp-514 (for protease activity; shared with dimeric partner) is an active-site residue. 2 dimerization of protease regions span residues 538–544 (GIGGFIK) and 577–589 (NILT…LNLP). The Reverse transcriptase domain occupies 632 to 822 (EGKISKIGPE…PPFLWMGYEL (191 aa)). The Mg(2+) site is built by Asp-698, Asp-773, and Asp-774. Residues 815–823 (FLWMGYELH) are RT 'primer grip'. Residues 986–1002 (WETWWTEHWQATWIPEW) carry the Tryptophan repeat motif motif. The RNase H type-1 domain occupies 1022–1145 (IEGAETYYVD…VDKLVSSGIR (124 aa)). Mg(2+) is bound by residues Asp-1031, Glu-1066, Asp-1086, and Asp-1137. Residues 1151-1192 (DGIDKAQVQHEKYHSNWRAMASDFNLPPIVAKEIVASCDKCQ) form an Integrase-type zinc finger. His-1160, His-1164, Cys-1188, and Cys-1191 together coordinate Zn(2+). The Integrase catalytic domain maps to 1202-1352 (VDCSPGIWQL…SARERIIDII (151 aa)). Residues Asp-1212, Asp-1264, and Glu-1300 each contribute to the Mg(2+) site. The integrase-type DNA-binding region spans 1371-1418 (FRVYYRDSRDPIWKGPAKLLWKGEGAVVIQDNSEIKVVPRRKAKIIRD).

Homotrimer; further assembles as hexamers of trimers. Interacts with gp41 (via C-terminus). Interacts with host CALM1; this interaction induces a conformational change in the Matrix protein, triggering exposure of the myristate group. Interacts with host AP3D1; this interaction allows the polyprotein trafficking to multivesicular bodies during virus assembly. Part of the pre-integration complex (PIC) which is composed of viral genome, matrix protein, Vpr and integrase. As to quaternary structure, homodimer; the homodimer further multimerizes as homohexamers or homopentamers. Interacts with human PPIA/CYPA; This interaction stabilizes the capsid. Interacts with human NUP153. Interacts with host PDZD8; this interaction stabilizes the capsid. Interacts with monkey TRIM5; this interaction destabilizes the capsid. In terms of assembly, homodimer, whose active site consists of two apposed aspartic acid residues. Heterodimer of p66 RT and p51 RT (RT p66/p51). Heterodimerization of RT is essential for DNA polymerase activity. The overall folding of the subdomains is similar in p66 RT and p51 RT but the spatial arrangements of the subdomains are dramatically different. As to quaternary structure, homotetramer; may further associate as a homohexadecamer. Part of the pre-integration complex (PIC) which is composed of viral genome, matrix protein, Vpr and integrase. Interacts with human SMARCB1/INI1 and human PSIP1/LEDGF isoform 1. Interacts with human KPNA3; this interaction might play a role in nuclear import of the pre-integration complex. Interacts with human NUP153; this interaction might play a role in nuclear import of the pre-integration complex. Mg(2+) serves as cofactor. Post-translationally, specific enzymatic cleavages by the viral protease yield mature proteins. The protease is released by autocatalytic cleavage. The polyprotein is cleaved during and after budding, this process is termed maturation. Proteolytic cleavage of p66 RT removes the RNase H domain to yield the p51 RT subunit. Nucleocapsid protein p7 might be further cleaved after virus entry. Tyrosine phosphorylated presumably in the virion by a host kinase. Phosphorylation is apparently not a major regulator of membrane association. In terms of processing, phosphorylated possibly by host MAPK1; this phosphorylation is necessary for Pin1-mediated virion uncoating. Post-translationally, methylated by host PRMT6, impairing its function by reducing RNA annealing and the initiation of reverse transcription.

The protein localises to the host cell membrane. It is found in the host endosome. The protein resides in the host multivesicular body. Its subcellular location is the virion membrane. It localises to the host nucleus. The protein localises to the host cytoplasm. It is found in the virion. It carries out the reaction Specific for a P1 residue that is hydrophobic, and P1' variable, but often Pro.. The enzyme catalyses Endohydrolysis of RNA in RNA/DNA hybrids. Three different cleavage modes: 1. sequence-specific internal cleavage of RNA. Human immunodeficiency virus type 1 and Moloney murine leukemia virus enzymes prefer to cleave the RNA strand one nucleotide away from the RNA-DNA junction. 2. RNA 5'-end directed cleavage 13-19 nucleotides from the RNA end. 3. DNA 3'-end directed cleavage 15-20 nucleotides away from the primer terminus.. It catalyses the reaction 3'-end directed exonucleolytic cleavage of viral RNA-DNA hybrid.. The catalysed reaction is DNA(n) + a 2'-deoxyribonucleoside 5'-triphosphate = DNA(n+1) + diphosphate. With respect to regulation, protease: The viral protease is inhibited by many synthetic protease inhibitors (PIs), such as amprenavir, atazanavir, indinavir, loprinavir, nelfinavir, ritonavir and saquinavir. Use of protease inhibitors in tritherapy regimens permit more ambitious therapeutic strategies. Reverse transcriptase/ribonuclease H: RT can be inhibited either by nucleoside RT inhibitors (NRTIs) or by non nucleoside RT inhibitors (NNRTIs). NRTIs act as chain terminators, whereas NNRTIs inhibit DNA polymerization by binding a small hydrophobic pocket near the RT active site and inducing an allosteric change in this region. Classical NRTIs are abacavir, adefovir (PMEA), didanosine (ddI), lamivudine (3TC), stavudine (d4T), tenofovir (PMPA), zalcitabine (ddC), and zidovudine (AZT). Classical NNRTIs are atevirdine (BHAP U-87201E), delavirdine, efavirenz (DMP-266), emivirine (I-EBU), and nevirapine (BI-RG-587). The tritherapies used as a basic effective treatment of AIDS associate two NRTIs and one NNRTI. Functionally, mediates, with Gag polyprotein, the essential events in virion assembly, including binding the plasma membrane, making the protein-protein interactions necessary to create spherical particles, recruiting the viral Env proteins, and packaging the genomic RNA via direct interactions with the RNA packaging sequence (Psi). Gag-Pol polyprotein may regulate its own translation, by the binding genomic RNA in the 5'-UTR. At low concentration, the polyprotein would promote translation, whereas at high concentration, the polyprotein would encapsidate genomic RNA and then shut off translation. In terms of biological role, targets the polyprotein to the plasma membrane via a multipartite membrane-binding signal, that includes its myristoylated N-terminus. Matrix protein is part of the pre-integration complex. Implicated in the release from host cell mediated by Vpu. Binds to RNA. Its function is as follows. Forms the conical core that encapsulates the genomic RNA-nucleocapsid complex in the virion. Most core are conical, with only 7% tubular. The core is constituted by capsid protein hexamer subunits. The core is disassembled soon after virion entry. Host restriction factors such as TRIM5-alpha or TRIMCyp bind retroviral capsids and cause premature capsid disassembly, leading to blocks in reverse transcription. Capsid restriction by TRIM5 is one of the factors which restricts HIV-1 to the human species. Host PIN1 apparently facilitates the virion uncoating. On the other hand, interactions with PDZD8 or CYPA stabilize the capsid. Encapsulates and protects viral dimeric unspliced genomic RNA (gRNA). Binds these RNAs through its zinc fingers. Acts as a nucleic acid chaperone which is involved in rearangement of nucleic acid secondary structure during gRNA retrotranscription. Also facilitates template switch leading to recombination. As part of the polyprotein, participates in gRNA dimerization, packaging, tRNA incorporation and virion assembly. Functionally, aspartyl protease that mediates proteolytic cleavages of Gag and Gag-Pol polyproteins during or shortly after the release of the virion from the plasma membrane. Cleavages take place as an ordered, step-wise cascade to yield mature proteins. This process is called maturation. Displays maximal activity during the budding process just prior to particle release from the cell. Also cleaves Nef and Vif, probably concomitantly with viral structural proteins on maturation of virus particles. Hydrolyzes host EIF4GI and PABP1 in order to shut off the capped cellular mRNA translation. The resulting inhibition of cellular protein synthesis serves to ensure maximal viral gene expression and to evade host immune response. Also mediates cleavage of host YTHDF3. Mediates cleavage of host CARD8, thereby activating the CARD8 inflammasome, leading to the clearance of latent HIV-1 in patient CD4(+) T-cells after viral reactivation; in contrast, HIV-1 can evade CARD8-sensing when its protease remains inactive in infected cells prior to viral budding. In terms of biological role, multifunctional enzyme that converts the viral RNA genome into dsDNA in the cytoplasm, shortly after virus entry into the cell. This enzyme displays a DNA polymerase activity that can copy either DNA or RNA templates, and a ribonuclease H (RNase H) activity that cleaves the RNA strand of RNA-DNA heteroduplexes in a partially processive 3' to 5' endonucleasic mode. Conversion of viral genomic RNA into dsDNA requires many steps. A tRNA(3)-Lys binds to the primer-binding site (PBS) situated at the 5'-end of the viral RNA. RT uses the 3' end of the tRNA primer to perform a short round of RNA-dependent minus-strand DNA synthesis. The reading proceeds through the U5 region and ends after the repeated (R) region which is present at both ends of viral RNA. The portion of the RNA-DNA heteroduplex is digested by the RNase H, resulting in a ssDNA product attached to the tRNA primer. This ssDNA/tRNA hybridizes with the identical R region situated at the 3' end of viral RNA. This template exchange, known as minus-strand DNA strong stop transfer, can be either intra- or intermolecular. RT uses the 3' end of this newly synthesized short ssDNA to perform the RNA-dependent minus-strand DNA synthesis of the whole template. RNase H digests the RNA template except for two polypurine tracts (PPTs) situated at the 5'-end and near the center of the genome. It is not clear if both polymerase and RNase H activities are simultaneous. RNase H probably can proceed both in a polymerase-dependent (RNA cut into small fragments by the same RT performing DNA synthesis) and a polymerase-independent mode (cleavage of remaining RNA fragments by free RTs). Secondly, RT performs DNA-directed plus-strand DNA synthesis using the PPTs that have not been removed by RNase H as primers. PPTs and tRNA primers are then removed by RNase H. The 3' and 5' ssDNA PBS regions hybridize to form a circular dsDNA intermediate. Strand displacement synthesis by RT to the PBS and PPT ends produces a blunt ended, linear dsDNA copy of the viral genome that includes long terminal repeats (LTRs) at both ends. Its function is as follows. Catalyzes viral DNA integration into the host chromosome, by performing a series of DNA cutting and joining reactions. This enzyme activity takes place after virion entry into a cell and reverse transcription of the RNA genome in dsDNA. The first step in the integration process is 3' processing. This step requires a complex comprising the viral genome, matrix protein, Vpr and integrase. This complex is called the pre-integration complex (PIC). The integrase protein removes 2 nucleotides from each 3' end of the viral DNA, leaving recessed CA OH's at the 3' ends. In the second step, the PIC enters cell nucleus. This process is mediated through integrase and Vpr proteins, and allows the virus to infect a non dividing cell. This ability to enter the nucleus is specific of lentiviruses, other retroviruses cannot and rely on cell division to access cell chromosomes. In the third step, termed strand transfer, the integrase protein joins the previously processed 3' ends to the 5' ends of strands of target cellular DNA at the site of integration. The 5'-ends are produced by integrase-catalyzed staggered cuts, 5 bp apart. A Y-shaped, gapped, recombination intermediate results, with the 5'-ends of the viral DNA strands and the 3' ends of target DNA strands remaining unjoined, flanking a gap of 5 bp. The last step is viral DNA integration into host chromosome. This involves host DNA repair synthesis in which the 5 bp gaps between the unjoined strands are filled in and then ligated. Since this process occurs at both cuts flanking the HIV genome, a 5 bp duplication of host DNA is produced at the ends of HIV-1 integration. Alternatively, Integrase may catalyze the excision of viral DNA just after strand transfer, this is termed disintegration. The sequence is that of Gag-Pol polyprotein (gag-pol) from Human immunodeficiency virus type 1 group M subtype H (isolate VI991) (HIV-1).